Reading from the N-terminus, the 151-residue chain is Small ribosomal subunit protein uS9 (151 aa).

Positions 1-19 (MTETTPAPQTPAAPAGPAQ) are enriched in low complexity. Disordered regions lie at residues 1-20 (MTET…PAQS) and 121-151 (KAGF…YSKR). The span at 127–136 (RDPRATERKK) shows a compositional bias: basic and acidic residues. Residues 137–151 (YGLKKARKAPQYSKR) show a composition bias toward basic residues.

It belongs to the universal ribosomal protein uS9 family.

The polypeptide is Small ribosomal subunit protein uS9 (rpsI) (Mycobacterium bovis (strain ATCC BAA-935 / AF2122/97)).